We begin with the raw amino-acid sequence, 175 residues long: 3-hydroxydecanoyl-[acyl-carrier-protein] dehydratase (175 aa).

Residue histidine 71 is part of the active site.

This sequence belongs to the thioester dehydratase family. FabA subfamily. As to quaternary structure, homodimer.

The protein localises to the cytoplasm. It carries out the reaction a (3R)-hydroxyacyl-[ACP] = a (2E)-enoyl-[ACP] + H2O. The catalysed reaction is (3R)-hydroxydecanoyl-[ACP] = (2E)-decenoyl-[ACP] + H2O. The enzyme catalyses (2E)-decenoyl-[ACP] = (3Z)-decenoyl-[ACP]. It functions in the pathway lipid metabolism; fatty acid biosynthesis. Necessary for the introduction of cis unsaturation into fatty acids. Catalyzes the dehydration of (3R)-3-hydroxydecanoyl-ACP to E-(2)-decenoyl-ACP and then its isomerization to Z-(3)-decenoyl-ACP. Can catalyze the dehydratase reaction for beta-hydroxyacyl-ACPs with saturated chain lengths up to 16:0, being most active on intermediate chain length. This Rhodopseudomonas palustris (strain ATCC BAA-98 / CGA009) protein is 3-hydroxydecanoyl-[acyl-carrier-protein] dehydratase.